The chain runs to 253 residues: RNA polymerase sigma factor SigI6 (253 aa).

A Polymerase core binding motif is present at residues 63–76 (EEYSVALLAFNEAI). The H-T-H motif DNA-binding region spans 203-222 (TLELLKLAKVSRRTIERNKK).

Belongs to the sigma-70 factor family. SigI subfamily. As to quaternary structure, interacts with RsgI6.

It localises to the cytoplasm. With respect to regulation, negatively regulated by the anti-sigma-I factor RsgI6. Binding of the polysaccharide substrate to RsgI6 may lead to the release and activation of SigI6. In terms of biological role, sigma factors are initiation factors that promote the attachment of RNA polymerase to specific initiation sites and are then released. This sigma factor is involved in regulation of cellulosomal genes via an external polysaccharide-sensing mechanism. Recognizes the predicted promoters associated with sigI6 itself, xyn11B, xyn10D, xyn10Z, xyn10Y, cel9V, cseP, sigI1, cipA, and rsgI5. The polypeptide is RNA polymerase sigma factor SigI6 (Acetivibrio thermocellus (strain ATCC 27405 / DSM 1237 / JCM 9322 / NBRC 103400 / NCIMB 10682 / NRRL B-4536 / VPI 7372) (Clostridium thermocellum)).